The sequence spans 125 residues: uncharacterized protein (125 aa).

This is an uncharacterized protein from Dictyostelium discoideum (Social amoeba).